A 435-amino-acid chain; its full sequence is Type A flavoprotein fprA (435 aa).

Residues 48–228 (ANGTTYNAYA…PFRSFVAQAL (181 aa)) are zinc metallo-hydrolase. 6 residues coordinate Fe cation: H98, E100, D102, H167, D186, and H243. Positions 276-415 (LLIFYVSAYG…EGRAFGRRLA (140 aa)) constitute a Flavodoxin-like domain.

This sequence in the N-terminal section; belongs to the zinc metallo-hydrolase group 3 family. In terms of assembly, homodimer. FMN is required as a cofactor. Requires Fe cation as cofactor.

In terms of biological role, low-potential electron donor to a number of redox enzymes. This chain is Type A flavoprotein fprA (fprA), found in Rhodobacter capsulatus (strain ATCC BAA-309 / NBRC 16581 / SB1003).